The following is a 24-amino-acid chain: MQKTKMIFTIGPASXTEEMLVXFI.

Belongs to the pyruvate kinase family. In terms of assembly, homotetramer. The cofactor is Mg(2+). It depends on K(+) as a cofactor.

It catalyses the reaction pyruvate + ATP = phosphoenolpyruvate + ADP + H(+). The protein operates within carbohydrate degradation; glycolysis; pyruvate from D-glyceraldehyde 3-phosphate: step 5/5. The chain is Pyruvate kinase (pyk) from Clostridium pasteurianum.